We begin with the raw amino-acid sequence, 108 residues long: UPF0145 protein MADE_1007770 (108 aa).

The protein belongs to the UPF0145 family.

In Alteromonas mediterranea (strain DSM 17117 / CIP 110805 / LMG 28347 / Deep ecotype), this protein is UPF0145 protein MADE_1007770.